The primary structure comprises 262 residues: tRNA (guanine-N(1)-)-methyltransferase (262 aa).

Residues G113 and 137–142 each bind S-adenosyl-L-methionine; that span reads IGDYVL.

It belongs to the RNA methyltransferase TrmD family. In terms of assembly, homodimer.

The protein localises to the cytoplasm. The catalysed reaction is guanosine(37) in tRNA + S-adenosyl-L-methionine = N(1)-methylguanosine(37) in tRNA + S-adenosyl-L-homocysteine + H(+). Its function is as follows. Specifically methylates guanosine-37 in various tRNAs. In Thermobifida fusca (strain YX), this protein is tRNA (guanine-N(1)-)-methyltransferase.